A 428-amino-acid chain; its full sequence is Serine--tRNA ligase (428 aa).

Residue 235 to 237 coordinates L-serine; sequence TAE. 266 to 268 contributes to the ATP binding site; sequence RSE. Glu-289 is a binding site for L-serine. 353-356 is a binding site for ATP; sequence EISS. Ser-389 is a binding site for L-serine.

This sequence belongs to the class-II aminoacyl-tRNA synthetase family. Type-1 seryl-tRNA synthetase subfamily. As to quaternary structure, homodimer. The tRNA molecule binds across the dimer.

The protein localises to the cytoplasm. The enzyme catalyses tRNA(Ser) + L-serine + ATP = L-seryl-tRNA(Ser) + AMP + diphosphate + H(+). The catalysed reaction is tRNA(Sec) + L-serine + ATP = L-seryl-tRNA(Sec) + AMP + diphosphate + H(+). The protein operates within aminoacyl-tRNA biosynthesis; selenocysteinyl-tRNA(Sec) biosynthesis; L-seryl-tRNA(Sec) from L-serine and tRNA(Sec): step 1/1. Its function is as follows. Catalyzes the attachment of serine to tRNA(Ser). Is also able to aminoacylate tRNA(Sec) with serine, to form the misacylated tRNA L-seryl-tRNA(Sec), which will be further converted into selenocysteinyl-tRNA(Sec). In Shewanella baltica (strain OS155 / ATCC BAA-1091), this protein is Serine--tRNA ligase.